Here is a 149-residue protein sequence, read N- to C-terminus: Cyanate hydratase (149 aa).

Catalysis depends on residues R90, E93, and S116.

The protein belongs to the cyanase family.

The catalysed reaction is cyanate + hydrogencarbonate + 3 H(+) = NH4(+) + 2 CO2. Functionally, catalyzes the reaction of cyanate with bicarbonate to produce ammonia and carbon dioxide. The sequence is that of Cyanate hydratase from Synechocystis sp. (strain ATCC 27184 / PCC 6803 / Kazusa).